Here is a 492-residue protein sequence, read N- to C-terminus: GDP-Man:Man(3)GlcNAc(2)-PP-Dol alpha-1,2-mannosyltransferase (492 aa).

Topologically, residues 1 to 19 are lumenal; it reads MAAGERSWCLCKLLRFFYS. Residues 20–40 form a helical membrane-spanning segment; the sequence is LFFPGLIVCGTLCVCLVIVLW. The Cytoplasmic segment spans residues 41–233; that stretch reads GIRLLLQRKK…TRNPFLSKVK (193 aa). Positions 234 to 254 form an intramembrane region, helical; that stretch reads LIYYYLFAFIYGLVGSCSDVV. Topologically, residues 255–399 are cytoplasmic; that stretch reads MVNSSWTLNH…IGLHTMWNEH (145 aa). Positions 400–420 form an intramembrane region, helical; that stretch reads FGIGVVECMAAGTIILAHNSG. Residues 421–492 lie on the Cytoplasmic side of the membrane; that stretch reads GPKLDIVVPH…FLSSVEKLFK (72 aa).

It belongs to the glycosyltransferase group 1 family. Glycosyltransferase 4 subfamily.

The protein resides in the endoplasmic reticulum membrane. The catalysed reaction is an alpha-D-Man-(1-&gt;3)-[alpha-D-Man-(1-&gt;6)]-beta-D-Man-(1-&gt;4)-beta-D-GlcNAc-(1-&gt;4)-alpha-D-GlcNAc-diphospho-di-trans,poly-cis-dolichol + 2 GDP-alpha-D-mannose = an alpha-D-Man-(1-&gt;2)-alpha-D-Man-(1-&gt;2)-alpha-D-Man-(1-&gt;3)-[alpha-D-Man-(1-&gt;6)]-beta-D-Man-(1-&gt;4)-beta-D-GlcNAc-(1-&gt;4)-alpha-D-GlcNAc-diphospho-di-trans,poly-cis-dolichol + 2 GDP + 2 H(+). It functions in the pathway protein modification; protein glycosylation. Functionally, GDP-Man:Man(3)GlcNAc(2)-PP-Dol alpha-1,2-mannosyltransferase that operates in the biosynthetic pathway of dolichol-linked oligosaccharides, the glycan precursors employed in protein asparagine (N)-glycosylation. The assembly of dolichol-linked oligosaccharides begins on the cytosolic side of the endoplasmic reticulum membrane and finishes in its lumen. The sequential addition of sugars to dolichol pyrophosphate produces dolichol-linked oligosaccharides containing fourteen sugars, including two GlcNAcs, nine mannoses and three glucoses. Once assembled, the oligosaccharide is transferred from the lipid to nascent proteins by oligosaccharyltransferases. Catalyzes, on the cytoplasmic face of the endoplasmic reticulum, the addition of the fourth and fifth mannose residues to the dolichol-linked oligosaccharide chain, to produce Man(5)GlcNAc(2)-PP-dolichol core oligosaccharide. Man(5)GlcNAc(2)-PP-dolichol is a substrate for ALG3, the following enzyme in the biosynthetic pathway. The sequence is that of GDP-Man:Man(3)GlcNAc(2)-PP-Dol alpha-1,2-mannosyltransferase from Homo sapiens (Human).